A 192-amino-acid chain; its full sequence is Interleukin-18 (192 aa).

Positions 1-35 (MAAIPVDDCINFVGMKFIDNTLYFVADSDENLETD) are excised as a propeptide.

The protein belongs to the IL-1 family. Forms a ternary complex with ligand-binding receptor subunit IL18R1 and signaling receptor subunit IL18RAP at the plasma membrane. Mature IL18 first binds to IL18R1 forming a low affinity binary complex, which then interacts with IL18RAP to form a high affinity ternary complex that signals inside the cell. Interacts with cargo receptor TMED10; the interaction mediates the translocation from the cytoplasm into the ERGIC (endoplasmic reticulum-Golgi intermediate compartment) and thereby secretion. The pro-IL-18 precursor is processed by CASP1, CASP4 or CASP5 to yield its mature, active form. The pro-IL-18 precursor features autoinhibitory interactions between the propeptide and the post-cleavage-site region, preventing recognition by the IL18R1 receptor. Processing by CASP1, CASP4 or CASP5 induces conformational changes to generate critical receptor-binding sites. The mature form is then secreted and released in the extracellular milieu by passing through the gasdermin-D (GSDMD) pore. In contrast, cleavage by CASP3 inactivates IL18.

It is found in the cytoplasm. The protein localises to the cytosol. It localises to the secreted. In terms of biological role, pro-inflammatory cytokine primarily involved in epithelial barrier repair, polarized T-helper 1 (Th1) cell and natural killer (NK) cell immune responses. Upon binding to IL18R1 and IL18RAP, forms a signaling ternary complex which activates NF-kappa-B, triggering synthesis of inflammatory mediators. Synergizes with IL12/interleukin-12 to induce IFNG synthesis from T-helper 1 (Th1) cells and natural killer (NK) cells. Involved in transduction of inflammation downstream of pyroptosis: its mature form is specifically released in the extracellular milieu by passing through the gasdermin-D (GSDMD) pore. This is Interleukin-18 (IL18) from Felis catus (Cat).